Here is a 376-residue protein sequence, read N- to C-terminus: Probable tRNA sulfurtransferase (376 aa).

Positions 51–152 (EENLKNLKYV…KNSVYVFDKS (102 aa)) constitute a THUMP domain. ATP-binding positions include 170–171 (LI), 195–196 (TF), arginine 252, glycine 274, and glutamine 283.

The protein belongs to the ThiI family.

The protein localises to the cytoplasm. The catalysed reaction is [ThiI sulfur-carrier protein]-S-sulfanyl-L-cysteine + a uridine in tRNA + 2 reduced [2Fe-2S]-[ferredoxin] + ATP + H(+) = [ThiI sulfur-carrier protein]-L-cysteine + a 4-thiouridine in tRNA + 2 oxidized [2Fe-2S]-[ferredoxin] + AMP + diphosphate. The enzyme catalyses [ThiS sulfur-carrier protein]-C-terminal Gly-Gly-AMP + S-sulfanyl-L-cysteinyl-[cysteine desulfurase] + AH2 = [ThiS sulfur-carrier protein]-C-terminal-Gly-aminoethanethioate + L-cysteinyl-[cysteine desulfurase] + A + AMP + 2 H(+). Its pathway is cofactor biosynthesis; thiamine diphosphate biosynthesis. Its function is as follows. Catalyzes the ATP-dependent transfer of a sulfur to tRNA to produce 4-thiouridine in position 8 of tRNAs, which functions as a near-UV photosensor. Also catalyzes the transfer of sulfur to the sulfur carrier protein ThiS, forming ThiS-thiocarboxylate. This is a step in the synthesis of thiazole, in the thiamine biosynthesis pathway. The sulfur is donated as persulfide by IscS. This chain is Probable tRNA sulfurtransferase, found in Mycoplasmopsis synoviae (strain 53) (Mycoplasma synoviae).